Here is a 171-residue protein sequence, read N- to C-terminus: Regulatory protein RecX (171 aa).

The protein belongs to the RecX family.

Its subcellular location is the cytoplasm. In terms of biological role, modulates RecA activity. This chain is Regulatory protein RecX, found in Mycobacterium leprae (strain Br4923).